The chain runs to 84 residues: Large ribosomal subunit protein bL27 (84 aa).

The tract at residues 1-25 is disordered; it reads MSHKKAGGSTRNGRDSNAQRRGVKK.

The protein belongs to the bacterial ribosomal protein bL27 family.

The protein is Large ribosomal subunit protein bL27 of Desulforapulum autotrophicum (strain ATCC 43914 / DSM 3382 / VKM B-1955 / HRM2) (Desulfobacterium autotrophicum).